Here is a 930-residue protein sequence, read N- to C-terminus: RNA-binding protein 10 (930 aa).

Composition is skewed to basic and acidic residues over residues 1–14 (MEYE…DRTG) and 21–45 (RSQD…RSYP). A disordered region spans residues 1 to 127 (MEYERRGGRG…EDEEEEEEKA (127 aa)). Residues 59–70 (DSSEEQSAEDSY) show a composition bias toward acidic residues. A phosphoserine mark is found at Ser61 and Ser89. A compositionally biased stretch (basic residues) spans 80–89 (RRRRRRHRHS). Basic and acidic residues predominate over residues 98-111 (RDGDYRDQDYRTEQ). A compositionally biased stretch (acidic residues) spans 112-125 (GEEEEEEDEEEEEE). One can recognise an RRM 1 domain in the interval 129–209 (NIVMLRMLPQ…QKVSMHYSDP (81 aa)). The segment at 212 to 242 (KINEDWLCNKCGVQNFKRREKCFKCGVPKSE) adopts a RanBP2-type zinc-finger fold. One can recognise an RRM 2 domain in the interval 300–384 (DTIILRNLNP…KTINVEFAKG (85 aa)). Lys383 is subject to N6-acetyllysine. Disordered stretches follow at residues 464–487 (GPGM…EAGA), 503–522 (APGL…TATN), 537–566 (ELQS…QYPV), 620–646 (EQSA…HKTK), and 712–753 (DLPK…EEKL). Positions 507–522 (YQQSAEGSSGQSTATN) are enriched in polar residues. The span at 540 to 562 (SPTQPSSSAFPPATSPTAPEAYS) shows a compositional bias: low complexity. Over residues 623–639 (ADGHKDTGASSKEGKEK) the composition is skewed to basic and acidic residues. 5 positions are modified to phosphoserine: Ser718, Ser723, Ser733, Ser736, and Ser738. Residues 743-753 (ERGGPEREEKL) are compositionally biased toward basic and acidic residues. The C2H2-type; atypical zinc finger occupies 759–784 (LACLLCRRQFPSKEALIRHQQLSGLH). Phosphoserine occurs at positions 781, 797, and 845. Residues 818–861 (AAERREKYGIPEPPEPKRRKYGGISTASVDFEQPTRDGLGSDNI) form a disordered region. Positions 858-904 (SDNIGSRMLQAMGWKEGSGLGRKKQGIVTPIEAQTRVRGSGLGARGS) constitute a G-patch domain. Arg902 carries the omega-N-methylarginine modification.

As to quaternary structure, associates with the spliceosome. Component of a large chromatin remodeling complex, at least composed of MYSM1, PCAF, RBM10 and KIF11/TRIP5.

Its subcellular location is the nucleus. In terms of biological role, binds to ssRNA containing the consensus sequence 5'-AGGUAA-3'. May be involved in post-transcriptional processing, most probably in mRNA splicing. Binds to RNA homopolymers, with a preference for poly(G) and poly(U) and little for poly(A). May bind to specific miRNA hairpins. The polypeptide is RNA-binding protein 10 (Mus musculus (Mouse)).